The sequence spans 46 residues: Large ribosomal subunit protein bL34c (46 aa).

Belongs to the bacterial ribosomal protein bL34 family.

It localises to the plastid. It is found in the chloroplast. This chain is Large ribosomal subunit protein bL34c, found in Pyropia yezoensis (Susabi-nori).